The chain runs to 567 residues: Potassium-transporting ATPase potassium-binding subunit (567 aa).

The next 11 helical transmembrane spans lie at 5–25 (GWIQ…PLGF), 64–84 (TAYA…LYAL), 136–156 (GLTV…IALI), 179–199 (LYVL…LGIP), 254–274 (ISNL…TNVF), 285–305 (WAIL…CYWA), 330–350 (FGIA…CGAV), 357–376 (FTAL…EVIV), 421–441 (MLAI…AVVL), 486–506 (ITIG…ALAI), and 529–549 (LFVG…FFPA).

The protein belongs to the KdpA family. As to quaternary structure, the system is composed of three essential subunits: KdpA, KdpB and KdpC.

The protein resides in the cell inner membrane. Its function is as follows. Part of the high-affinity ATP-driven potassium transport (or Kdp) system, which catalyzes the hydrolysis of ATP coupled with the electrogenic transport of potassium into the cytoplasm. This subunit binds the periplasmic potassium ions and delivers the ions to the membrane domain of KdpB through an intramembrane tunnel. This Mesorhizobium japonicum (strain LMG 29417 / CECT 9101 / MAFF 303099) (Mesorhizobium loti (strain MAFF 303099)) protein is Potassium-transporting ATPase potassium-binding subunit.